The chain runs to 510 residues: Bifunctional pantoate ligase/cytidylate kinase (510 aa).

The pantoate--beta-alanine ligase stretch occupies residues 1–276 (MKKVIIRKTE…CGETRLIDHV (276 aa)). Residue 29–36 (MGNLHNGH) participates in ATP binding. The active-site Proton donor is H36. Position 61 (Q61) interacts with (R)-pantoate. Position 61 (Q61) interacts with beta-alanine. Residue 150 to 153 (GEKD) coordinates ATP. (R)-pantoate is bound at residue Q156. Residue 187–190 (LSSR) coordinates ATP. A cytidylate kinase region spans residues 277–510 (FLMKRRPIIA…DKIPKETEIK (234 aa)).

It in the N-terminal section; belongs to the pantothenate synthetase family. The protein in the C-terminal section; belongs to the cytidylate kinase family. Type 1 subfamily.

The protein resides in the cytoplasm. The enzyme catalyses (R)-pantoate + beta-alanine + ATP = (R)-pantothenate + AMP + diphosphate + H(+). It catalyses the reaction CMP + ATP = CDP + ADP. It carries out the reaction dCMP + ATP = dCDP + ADP. The protein operates within cofactor biosynthesis; (R)-pantothenate biosynthesis; (R)-pantothenate from (R)-pantoate and beta-alanine: step 1/1. Catalyzes the condensation of pantoate with beta-alanine in an ATP-dependent reaction via a pantoyl-adenylate intermediate. Its function is as follows. Catalyzes the transfer of a phosphate group from ATP to either CMP or dCMP to form CDP or dCDP and ADP, respectively. The protein is Bifunctional pantoate ligase/cytidylate kinase of Prochlorococcus marinus (strain MIT 9215).